A 771-amino-acid polypeptide reads, in one-letter code: Ribonucleoside-diphosphate reductase large subunit (771 aa).

Positions 1 to 92 (MFVIKRNGYK…VSNLHKETKK (92 aa)) constitute an ATP-cone domain. ATP-binding positions include 5-6 (KR), 11-17 (ENVMFDK), Thr-53, Asp-57, and Lys-88. GDP-binding residues include Ser-202 and Ser-217. DTTP contacts are provided by residues 226-228 (DSI), Lys-243, and Arg-256. Asn-427 provides a ligand contact to GDP. Residue Asn-427 is the Proton acceptor of the active site. The active-site Cysteine radical intermediate is the Cys-429. GDP-binding positions include Glu-431 and 603–606 (TAST). The Proton acceptor role is filled by Glu-431.

The protein belongs to the ribonucleoside diphosphate reductase large chain family. Interacts with RNR2/OPG047 subunit. Mg(2+) serves as cofactor.

It carries out the reaction a 2'-deoxyribonucleoside 5'-diphosphate + [thioredoxin]-disulfide + H2O = a ribonucleoside 5'-diphosphate + [thioredoxin]-dithiol. Its function is as follows. Ribonucleoside-diphosphate reductase holoenzyme provides the precursors necessary for viral DNA synthesis. Allows virus growth in non-dividing cells. Catalyzes the biosynthesis of deoxyribonucleotides from the corresponding ribonucleotides. The chain is Ribonucleoside-diphosphate reductase large subunit (OPG080) from Homo sapiens (Human).